The chain runs to 467 residues: 2-succinylbenzoate--CoA ligase (467 aa).

The protein belongs to the ATP-dependent AMP-binding enzyme family. MenE subfamily.

It catalyses the reaction 2-succinylbenzoate + ATP + CoA = 2-succinylbenzoyl-CoA + AMP + diphosphate. It functions in the pathway quinol/quinone metabolism; 1,4-dihydroxy-2-naphthoate biosynthesis; 1,4-dihydroxy-2-naphthoate from chorismate: step 5/7. It participates in quinol/quinone metabolism; menaquinone biosynthesis. In terms of biological role, converts 2-succinylbenzoate (OSB) to 2-succinylbenzoyl-CoA (OSB-CoA). The sequence is that of 2-succinylbenzoate--CoA ligase from Listeria monocytogenes serotype 4b (strain F2365).